The following is a 363-amino-acid chain: DNA replication and repair protein RecF (363 aa).

30-37 (GPNGSGKT) is an ATP binding site.

The protein belongs to the RecF family.

The protein resides in the cytoplasm. Functionally, the RecF protein is involved in DNA metabolism; it is required for DNA replication and normal SOS inducibility. RecF binds preferentially to single-stranded, linear DNA. It also seems to bind ATP. In Chlorobium phaeobacteroides (strain BS1), this protein is DNA replication and repair protein RecF.